The sequence spans 187 residues: Transmembrane protein 11-A, mitochondrial (187 aa).

The next 2 membrane-spanning stretches (helical) occupy residues 79–95 (TAVL…LALP) and 102–119 (VSLP…LYGI).

It belongs to the TMEM11 family.

Its subcellular location is the mitochondrion inner membrane. Functionally, plays a role in mitochondrial morphogenesis. The protein is Transmembrane protein 11-A, mitochondrial (tmem11-a) of Xenopus laevis (African clawed frog).